A 488-amino-acid chain; its full sequence is Malonate-semialdehyde dehydrogenase (488 aa).

Residues alanine 150, phenylalanine 152, lysine 176, glutamate 179, arginine 180, serine 229, and threonine 251 each coordinate NAD(+). The active-site Nucleophile is the cysteine 284. Residue glutamate 382 coordinates NAD(+).

It belongs to the aldehyde dehydrogenase family. IolA subfamily. As to quaternary structure, homotetramer.

It catalyses the reaction 3-oxopropanoate + NAD(+) + CoA + H2O = hydrogencarbonate + acetyl-CoA + NADH + H(+). The catalysed reaction is 2-methyl-3-oxopropanoate + NAD(+) + CoA + H2O = propanoyl-CoA + hydrogencarbonate + NADH + H(+). The protein operates within polyol metabolism; myo-inositol degradation into acetyl-CoA; acetyl-CoA from myo-inositol: step 7/7. Its function is as follows. Catalyzes the oxidation of malonate semialdehyde (MSA) and methylmalonate semialdehyde (MMSA) into acetyl-CoA and propanoyl-CoA, respectively. Is involved in a myo-inositol catabolic pathway. Bicarbonate, and not CO2, is the end-product of the enzymatic reaction. The polypeptide is Malonate-semialdehyde dehydrogenase (Listeria monocytogenes serotype 4b (strain CLIP80459)).